The following is a 215-amino-acid chain: Phosphatidylserine decarboxylase proenzyme (215 aa).

The active-site Schiff-base intermediate with substrate; via pyruvic acid is S184. S184 is modified (pyruvic acid (Ser); by autocatalysis).

This sequence belongs to the phosphatidylserine decarboxylase family. PSD-A subfamily. As to quaternary structure, heterodimer of a large membrane-associated beta subunit and a small pyruvoyl-containing alpha subunit. Requires pyruvate as cofactor. Is synthesized initially as an inactive proenzyme. Formation of the active enzyme involves a self-maturation process in which the active site pyruvoyl group is generated from an internal serine residue via an autocatalytic post-translational modification. Two non-identical subunits are generated from the proenzyme in this reaction, and the pyruvate is formed at the N-terminus of the alpha chain, which is derived from the carboxyl end of the proenzyme. The post-translation cleavage follows an unusual pathway, termed non-hydrolytic serinolysis, in which the side chain hydroxyl group of the serine supplies its oxygen atom to form the C-terminus of the beta chain, while the remainder of the serine residue undergoes an oxidative deamination to produce ammonia and the pyruvoyl prosthetic group on the alpha chain.

It is found in the cell membrane. It carries out the reaction a 1,2-diacyl-sn-glycero-3-phospho-L-serine + H(+) = a 1,2-diacyl-sn-glycero-3-phosphoethanolamine + CO2. Its pathway is phospholipid metabolism; phosphatidylethanolamine biosynthesis; phosphatidylethanolamine from CDP-diacylglycerol: step 2/2. Its function is as follows. Catalyzes the formation of phosphatidylethanolamine (PtdEtn) from phosphatidylserine (PtdSer). This Ralstonia nicotianae (strain ATCC BAA-1114 / GMI1000) (Ralstonia solanacearum) protein is Phosphatidylserine decarboxylase proenzyme.